A 489-amino-acid polypeptide reads, in one-letter code: Rhamnulokinase (489 aa).

Position 13-17 (13-17 (ASSGR)) interacts with ATP. Cys68 and Cys222 form a disulfide bridge. Substrate is bound by residues Gly83 and 236–238 (HDT). The active-site Proton acceptor is the Asp237. Thr259 is a binding site for ATP. Position 296 (Asn296) interacts with substrate. Gln304 is a binding site for ATP. A disulfide bond links Cys353 and Cys370. ATP is bound at residue Gly402. The cysteines at positions 413 and 417 are disulfide-linked.

Belongs to the rhamnulokinase family. The cofactor is Mg(2+).

The catalysed reaction is L-rhamnulose + ATP = L-rhamnulose 1-phosphate + ADP + H(+). It participates in carbohydrate degradation; L-rhamnose degradation; glycerone phosphate from L-rhamnose: step 2/3. Its function is as follows. Involved in the catabolism of L-rhamnose (6-deoxy-L-mannose). Catalyzes the transfer of the gamma-phosphate group from ATP to the 1-hydroxyl group of L-rhamnulose to yield L-rhamnulose 1-phosphate. The polypeptide is Rhamnulokinase (Salmonella paratyphi B (strain ATCC BAA-1250 / SPB7)).